Reading from the N-terminus, the 180-residue chain is dCTP deaminase, dUMP-forming (180 aa).

Residues 100–105, aspartate 117, 125–127, glutamine 146, tyrosine 160, and glutamine 167 each bind dCTP; these read RSSLGR and TLE. Residue glutamate 127 is the Proton donor/acceptor of the active site.

It belongs to the dCTP deaminase family. Homotrimer.

The enzyme catalyses dCTP + 2 H2O = dUMP + NH4(+) + diphosphate. It participates in pyrimidine metabolism; dUMP biosynthesis; dUMP from dCTP: step 1/1. Its function is as follows. Bifunctional enzyme that catalyzes both the deamination of dCTP to dUTP and the hydrolysis of dUTP to dUMP without releasing the toxic dUTP intermediate. The sequence is that of dCTP deaminase, dUMP-forming from Sulfurihydrogenibium sp. (strain YO3AOP1).